The sequence spans 70 residues: Conotoxin Pl171 (70 aa).

Residues 1–21 (MGMRMMFTMILLVVLVTTVVS) form the signal peptide. 2 cysteine pairs are disulfide-bonded: C54/C61 and C55/C67. At F69 the chain carries Phenylalanine amide.

It belongs to the conotoxin A superfamily. In terms of tissue distribution, expressed by the venom duct.

The protein localises to the secreted. In terms of biological role, probable neurotoxin with unknown target. Possibly targets ion channels. In Conus planorbis (Planorbis cone), this protein is Conotoxin Pl171.